The sequence spans 553 residues: Urocanate hydratase (553 aa).

Residues G51–G52, Q129, G175–G177, E195, R200, N241–A242, Q262–H266, Y272–L273, and Y321 contribute to the NAD(+) site. C409 is an active-site residue. G491 is an NAD(+) binding site.

Belongs to the urocanase family. It depends on NAD(+) as a cofactor.

It is found in the cytoplasm. It catalyses the reaction 4-imidazolone-5-propanoate = trans-urocanate + H2O. It participates in amino-acid degradation; L-histidine degradation into L-glutamate; N-formimidoyl-L-glutamate from L-histidine: step 2/3. Functionally, catalyzes the conversion of urocanate to 4-imidazolone-5-propionate. The chain is Urocanate hydratase from Sphingopyxis alaskensis (strain DSM 13593 / LMG 18877 / RB2256) (Sphingomonas alaskensis).